Consider the following 134-residue polypeptide: ATP synthase epsilon chain (134 aa).

Belongs to the ATPase epsilon chain family. As to quaternary structure, F-type ATPases have 2 components, CF(1) - the catalytic core - and CF(0) - the membrane proton channel. CF(1) has five subunits: alpha(3), beta(3), gamma(1), delta(1), epsilon(1). CF(0) has three main subunits: a, b and c.

Its subcellular location is the cell inner membrane. Functionally, produces ATP from ADP in the presence of a proton gradient across the membrane. The polypeptide is ATP synthase epsilon chain (Sinorhizobium fredii (strain NBRC 101917 / NGR234)).